Reading from the N-terminus, the 441-residue chain is Transducin-like enhancer protein 7 (441 aa).

Disordered regions lie at residues 1-77 and 91-119; these read MSGE…QWHL and PDAQ…SSSS. Residues 27–49 show a composition bias toward low complexity; sequence ESSGVSSQPEPQVQQQLGSLLGV. The span at 62 to 76 shows a compositional bias: polar residues; sequence PADQETSTVTQQQWH. Residues 108–119 are compositionally biased toward low complexity; it reads GSEVGQPYSSSS. WD repeat units follow at residues 156–194, 204–243, 247–285, 286–325, and 409–441; these read FHGK…AGEK, HPQD…QVRA, STGP…LIRK, HEVP…RLHQ, and EESS…QLLY.

The protein belongs to the WD repeat Groucho/TLE family.

The polypeptide is Transducin-like enhancer protein 7 (Homo sapiens (Human)).